A 285-amino-acid polypeptide reads, in one-letter code: MTFLQLLIIAVVQGITEFLPISSSGHLILIPNFTEFPDQGPLIDVAVHVGSLLAIIVYFFKDVLTLARGGFASIGIGTDRPDAPSERRLFWWIVLGTIPAVAFGLAIKLGAFNSIAETWFNITVIDDDLMSSIRFTDLIAFNLIVYGIALGLADWLGKEVKKFEDMSWRDGLIVGIAQALAIIPGTSRSGVTMTAARALGYSRYESARFSFLLSIPAVAGAGVLIVPEIFEAGATLAMDALIAGVLTFIAAFLTMAFLMNFLKRASMLVFVFYRVAMGCALLAFF.

A run of 7 helical transmembrane segments spans residues 40 to 60, 89 to 109, 137 to 157, 171 to 191, 209 to 229, 241 to 261, and 265 to 285; these read GPLI…VYFF, LFWW…AIKL, DLIA…DWLG, GLIV…RSGV, FSFL…VPEI, LIAG…LMNF, and ASML…LAFF.

The protein belongs to the UppP family.

The protein localises to the cell inner membrane. It carries out the reaction di-trans,octa-cis-undecaprenyl diphosphate + H2O = di-trans,octa-cis-undecaprenyl phosphate + phosphate + H(+). Catalyzes the dephosphorylation of undecaprenyl diphosphate (UPP). Confers resistance to bacitracin. The chain is Undecaprenyl-diphosphatase from Erythrobacter litoralis (strain HTCC2594).